The primary structure comprises 476 residues: Glycogen synthase (476 aa).

Lys15 contacts ADP-alpha-D-glucose.

This sequence belongs to the glycosyltransferase 1 family. Bacterial/plant glycogen synthase subfamily.

The catalysed reaction is [(1-&gt;4)-alpha-D-glucosyl](n) + ADP-alpha-D-glucose = [(1-&gt;4)-alpha-D-glucosyl](n+1) + ADP + H(+). The protein operates within glycan biosynthesis; glycogen biosynthesis. Synthesizes alpha-1,4-glucan chains using ADP-glucose. In Haemophilus influenzae (strain PittEE), this protein is Glycogen synthase.